Consider the following 539-residue polypeptide: Chaperonin GroEL (539 aa).

Residues 29-32 (TLGP), 86-90 (DGTTT), Gly413, 476-478 (NAA), and Asp492 each bind ATP.

Belongs to the chaperonin (HSP60) family. In terms of assembly, forms a cylinder of 14 subunits composed of two heptameric rings stacked back-to-back. Interacts with the co-chaperonin GroES.

Its subcellular location is the cytoplasm. It catalyses the reaction ATP + H2O + a folded polypeptide = ADP + phosphate + an unfolded polypeptide.. Together with its co-chaperonin GroES, plays an essential role in assisting protein folding. The GroEL-GroES system forms a nano-cage that allows encapsulation of the non-native substrate proteins and provides a physical environment optimized to promote and accelerate protein folding. The sequence is that of Chaperonin GroEL from Streptococcus thermophilus (strain CNRZ 1066).